A 173-amino-acid chain; its full sequence is dCTP deaminase, dUMP-forming (173 aa).

Residues 93-98, Asp111, 119-121, Gln138, and Tyr151 contribute to the dCTP site; these read RSSIGR and TLE. Residue Glu121 is the Proton donor/acceptor of the active site.

This sequence belongs to the dCTP deaminase family. Homotrimer.

The catalysed reaction is dCTP + 2 H2O = dUMP + NH4(+) + diphosphate. It participates in pyrimidine metabolism; dUMP biosynthesis; dUMP from dCTP: step 1/1. Bifunctional enzyme that catalyzes both the deamination of dCTP to dUTP and the hydrolysis of dUTP to dUMP without releasing the toxic dUTP intermediate. The polypeptide is dCTP deaminase, dUMP-forming (Cytophaga hutchinsonii (strain ATCC 33406 / DSM 1761 / CIP 103989 / NBRC 15051 / NCIMB 9469 / D465)).